The chain runs to 387 residues: 3-ketoacyl-CoA thiolase (387 aa).

Cys91 (acyl-thioester intermediate) is an active-site residue. Active-site proton acceptor residues include His343 and Cys373.

It belongs to the thiolase-like superfamily. Thiolase family. Heterotetramer of two alpha chains (FadB) and two beta chains (FadA).

The protein localises to the cytoplasm. The enzyme catalyses an acyl-CoA + acetyl-CoA = a 3-oxoacyl-CoA + CoA. The protein operates within lipid metabolism; fatty acid beta-oxidation. Catalyzes the final step of fatty acid oxidation in which acetyl-CoA is released and the CoA ester of a fatty acid two carbons shorter is formed. This Shigella boydii serotype 4 (strain Sb227) protein is 3-ketoacyl-CoA thiolase.